Here is a 413-residue protein sequence, read N- to C-terminus: N-acylneuraminate cytidylyltransferase (413 aa).

Belongs to the CMP-NeuNAc synthase family. Requires Mg(2+) as cofactor. Mn(2+) is required as a cofactor.

It localises to the cytoplasm. The enzyme catalyses an N-acylneuraminate + CTP = a CMP-N-acyl-beta-neuraminate + diphosphate. Functionally, catalyzes the formation of CMP-N-acetylneuraminic acid (CMP-NeuNAc), which is essential for the formation of the capsule. This chain is N-acylneuraminate cytidylyltransferase (neuA), found in Streptococcus agalactiae serotype Ia (strain ATCC 27591 / A909 / CDC SS700).